A 500-amino-acid polypeptide reads, in one-letter code: Neuronal acetylcholine receptor subunit beta-2 (500 aa).

The N-terminal stretch at 1-24 (MAGHSNSMALFSFSLLWLCSGVLG) is a signal peptide. The Extracellular portion of the chain corresponds to 25–237 (TDTEERLVEH…IIRRKPLFYT (213 aa)). Asn-50 and Asn-167 each carry an N-linked (GlcNAc...) asparagine glycan. Cys-154 and Cys-168 form a disulfide bridge. The chain crosses the membrane as a helical span at residues 238 to 258 (INLIIPCVLITSLAILVFYLP). Over 259–266 (SDCGEKMT) the chain is Cytoplasmic. A helical transmembrane segment spans residues 267–287 (LCISVLLALTVFLLLISKIVP). Topologically, residues 288 to 299 (PTSLDVPLVGKY) are extracellular. A helical membrane pass occupies residues 300–320 (LMFTMVLVTFSIVTSVCVLNV). At 321 to 458 (HHRSPTTHTM…WKYVAMVIDR (138 aa)) the chain is on the cytoplasmic side. The helical transmembrane segment at 459–479 (LFLWIFVFVCVFGTVGMFLQP) threads the bilayer.

It belongs to the ligand-gated ion channel (TC 1.A.9) family. Acetylcholine receptor (TC 1.A.9.1) subfamily. Beta-2/CHRNB2 sub-subfamily. As to quaternary structure, neuronal AChR is a heteropentamer composed of two different types of subunits: alpha and beta. CHRNB2/Beta-2 subunit can be combined to CHRNA2/alpha-2, CHRNA3/alpha-3 or CHRNA4/alpha-4, CHRNA5/alpha-5, CHRNA6/alpha-6 and CHRNB3/beta-3 to give rise to functional receptors. CHRNA2:CHRNB2 and CHRNA4:CHRNB2 nAChR complexes exist in two subtypes: LS (low agonist sensitivity) with a (CHRNA2/4)3:(CHRNB2)2 and HS (high agonist sensitivity) with a (CHRNA2/4)2:(CHRNB2)3 stoichiometry; the subtypes differ in their subunit binding interfaces which are involved in ligand binding. Cells produce predominantly an (CHRNA4)3:(CHRNB2)2 nAChR. The stoichiometric form (CHRNA4)2:(CHRNB2)3 expression is selectively up-regulated by nicotine and has lower single channel conductance and calcium permeability. Also part of the stoichiometric forms: (CHRNA4:CHRNB2)2:CHRNB3 or (CHRNA6:CHRNB2)2:CHRNB3. Can form heteropentamers with CHRNA7, mainly found in basal forebrain cholinergic neurons. Interacts with RIC3; which is required for proper folding and assembly. Interacts with LYPD6. Expressed in most regions of the CNS.

It localises to the synaptic cell membrane. The protein resides in the cell membrane. It catalyses the reaction Ca(2+)(in) = Ca(2+)(out). The enzyme catalyses K(+)(in) = K(+)(out). The catalysed reaction is Na(+)(in) = Na(+)(out). Its activity is regulated as follows. Activated by a myriad of ligands such as acetylcholine, cytisine, nicotine, choline and epibatidine. Channel potentiation by calcium is stoichiometry-selective, CHRNA4:CHRNB2 nACh receptor is achieved by calcium association with topographically distinct sites framed by anionic residues within the CHRNA4 subunit and between the CHRNA4 and CHRNB2 subunits. Oligomeric amyloid-beta protein 42 activates specifially CHRNA7:CHRNB2 nAchRs. nAChR activity is inhibited by the antagonist alpha-conotoxins BuIA, PnIA, PnIC, GID and MII, small disulfide-constrained peptides from cone snails. In terms of biological role, component of neuronal acetylcholine receptors (nAChRs) that function as pentameric, ligand-gated cation channels with high calcium permeability among other activities. nAChRs are excitatory neurotrasnmitter receptors formed by a collection of nAChR subunits known to mediate synaptic transmission in the nervous system and the neuromuscular junction. Each nAchR subunit confers differential attributes to channel properties, including activation, deactivation and desensitization kinetics, pH sensitivity, cation permeability, and binding to allosteric modulators. CHRNB2 forms heteropentameric neuronal acetylcholine receptors with CHRNA2, CHRNA3, CHRNA4 and CHRNA6, as well as CHRNA5 and CHRNB3 as accesory subunits. Found in two major stoichiometric forms,(CHRNA4)3:(CHRNB2)2 and (CHRNA4)2:(CHRNB2)3, the two stoichiometric forms differ in their unitary conductance, calcium permeability, ACh sensitivity and potentiation by divalent cation. Heteropentameric channels with CHRNA6 and CHRNA4 exhibit high sensitivity to ACh and nicotine and are predominantly expressed in only a few brain areas, including dopaminergic neurons, norepirephrine neurons and cells of the visual system. nAChrs containing CHRNA6 subunits mediate endogenous cholinergic modulation of dopamine and gamma-aminobutyric acid (GABA) release in response to nicotine at nerve terminals. Also forms functional nAChRs with other subunits such as CHRNA7:CHRNB2, mainly expressed in basal forebrain cholinergic neurons. This Rattus norvegicus (Rat) protein is Neuronal acetylcholine receptor subunit beta-2 (Chrnb2).